The chain runs to 1003 residues: Cation-transporting ATPase HMA5 (1003 aa).

A disordered region spans residues 6 to 25 (LSAVAGGGRPAAAGGGGDEM). Residues 10–22 (AGGGRPAAAGGGG) show a composition bias toward gly residues. 3 consecutive HMA domains span residues 51–117 (EEAH…FDAE), 133–199 (LSAQ…FEAA), and 207–273 (DKIL…NGRL). Residues Cys62, Cys65, Cys144, and Cys147 each contribute to the Cu cation site. The next 8 membrane-spanning stretches (helical) occupy residues 302-322 (SLFLSIPVFFIRMVCPHIPFI), 331-351 (GPFHMGDLLKWILVSIVQFVV), 372-392 (VLVVLGTTASYVYSVCALLYG), 396-416 (GFHPPIYFETSAMIITFVLFG), 562-582 (IFVPIVITLSMITFLVWFLCG), 599-619 (FVFSLMFAIAVVVIACPCALG), 938-958 (FFAMAYNVVAIPVAAGALFPF), and 966-986 (WLAGACMAFSSVSVVCSSLLL).

It belongs to the cation transport ATPase (P-type) (TC 3.A.3) family. Type IB subfamily. As to expression, expressed in root vascular cylinder, vascular bundles and mesophyll cells of leaf blades, and anther walls and microspores of stamens.

Its subcellular location is the cell membrane. In terms of biological role, metal efflux transporter that may play a role in detoxification of heavy metals, such as zinc, copper, lead and cadmium, especially in the shoots. In Oryza sativa subsp. japonica (Rice), this protein is Cation-transporting ATPase HMA5.